A 390-amino-acid chain; its full sequence is Homoserine O-acetyltransferase (390 aa).

Residues 55–366 (NAILINHAFS…ESDCGHDAFL (312 aa)) form the AB hydrolase-1 domain. Serine 163 (nucleophile) is an active-site residue. Residue arginine 232 participates in substrate binding. Catalysis depends on residues aspartate 329 and histidine 362. Aspartate 363 serves as a coordination point for substrate.

Belongs to the AB hydrolase superfamily. MetX family. Homodimer.

It localises to the cytoplasm. The enzyme catalyses L-homoserine + acetyl-CoA = O-acetyl-L-homoserine + CoA. It functions in the pathway amino-acid biosynthesis; L-methionine biosynthesis via de novo pathway; O-acetyl-L-homoserine from L-homoserine: step 1/1. Transfers an acetyl group from acetyl-CoA to L-homoserine, forming acetyl-L-homoserine. In Desulfotalea psychrophila (strain LSv54 / DSM 12343), this protein is Homoserine O-acetyltransferase.